We begin with the raw amino-acid sequence, 140 residues long: Coiled-coil domain-containing protein 126 (140 aa).

An N-terminal signal peptide occupies residues 1–35; sequence MFRTISRKNMSQKLSFLLLVFGLIWGLMLLHYTLQ. The N-linked (GlcNAc...) asparagine glycan is linked to Asn110. The segment covering 118-130 has biased composition (low complexity); sequence NGTNGNLVPVTTN. Residues 118–140 form a disordered region; it reads NGTNGNLVPVTTNKRTSVSGSVR. Polar residues predominate over residues 131–140; the sequence is KRTSVSGSVR.

Its subcellular location is the secreted. This Mus musculus (Mouse) protein is Coiled-coil domain-containing protein 126 (Ccdc126).